A 464-amino-acid polypeptide reads, in one-letter code: Phosphoenolpyruvate carboxylase (464 aa).

This sequence belongs to the PEPCase type 2 family. Homotetramer. Mg(2+) is required as a cofactor.

The catalysed reaction is oxaloacetate + phosphate = phosphoenolpyruvate + hydrogencarbonate. Catalyzes the irreversible beta-carboxylation of phosphoenolpyruvate (PEP) to form oxaloacetate (OAA), a four-carbon dicarboxylic acid source for the tricarboxylic acid cycle. This chain is Phosphoenolpyruvate carboxylase, found in Thermofilum pendens (strain DSM 2475 / Hrk 5).